Consider the following 739-residue polypeptide: Protein kinase C (739 aa).

One can recognise a C2 domain in the interval 1 to 117; it reads MFTGKLQIKV…SETAVQDLWV (117 aa). 2 Phorbol-ester/DAG-type zinc fingers span residues 176–226 and 251–301; these read GHKF…VSKC and PHRF…ANTC. The region spanning 408–665 is the Protein kinase domain; the sequence is FNFIKVLGKG…ENEIRKHPFF (258 aa). ATP contacts are provided by residues 414–422 and K437; that span reads LGKGSFGKV. The active-site Proton acceptor is the D532. The AGC-kinase C-terminal domain occupies 666-737; sequence AKLDWKELEK…VNPKFGPERK (72 aa).

The protein belongs to the protein kinase superfamily. AGC Ser/Thr protein kinase family. PKC subfamily.

It catalyses the reaction L-seryl-[protein] + ATP = O-phospho-L-seryl-[protein] + ADP + H(+). The catalysed reaction is L-threonyl-[protein] + ATP = O-phospho-L-threonyl-[protein] + ADP + H(+). Functionally, PKC is activated by diacylglycerol which in turn phosphorylates a range of cellular proteins. PKC also serves as the receptor for phorbol esters, a class of tumor promoters. The chain is Protein kinase C (Pkc98E) from Drosophila melanogaster (Fruit fly).